A 350-amino-acid chain; its full sequence is Ferredoxin--NADP reductase (350 aa).

FAD contacts are provided by Asp49, Gln57, Tyr62, Val102, Phe136, Asp303, and Thr344.

It belongs to the ferredoxin--NADP reductase type 2 family. In terms of assembly, homodimer. It depends on FAD as a cofactor.

It catalyses the reaction 2 reduced [2Fe-2S]-[ferredoxin] + NADP(+) + H(+) = 2 oxidized [2Fe-2S]-[ferredoxin] + NADPH. This is Ferredoxin--NADP reductase from Granulibacter bethesdensis (strain ATCC BAA-1260 / CGDNIH1).